The chain runs to 262 residues: Serine/arginine-rich SC35-like splicing factor SCL30 (262 aa).

Positions 1-14 (MRRYSPPYYSPPRR) are enriched in low complexity. 2 disordered regions span residues 1 to 48 (MRRY…SHGS) and 123 to 262 (ASES…VSPR). Phosphoserine occurs at positions 5, 10, and 22. The span at 31 to 42 (GYGGGGGGGGRR) shows a compositional bias: gly residues. An RRM domain is found at 47-125 (GSLLVRNIPL…REITVVVASE (79 aa)). A compositionally biased stretch (basic and acidic residues) spans 125-152 (ESRKRPEEMRVKTRTRSREPSGSRDRSH). The segment covering 153 to 167 (GRSRSRSISRSRSPR) has biased composition (basic residues). 3 positions are modified to phosphoserine: Ser182, Ser204, and Ser206. Residue Tyr209 is modified to Phosphotyrosine. Residues 217–239 (PDRDRNGDNEIREKPGYEAEDRR) are compositionally biased toward basic and acidic residues. Residues 243–262 (RAVSRSPSGSRSRSVEVSPR) show a composition bias toward low complexity. A phosphoserine mark is found at Ser254, Ser256, and Ser260.

The protein belongs to the splicing factor SR family. SCL subfamily. Component of the spliceosome. Interacts with RS2Z33, CYP59, CYP63 and CYP95. Phosphorylated.

Its subcellular location is the nucleus speckle. Functionally, involved in intron recognition and spliceosome assembly. Probably active at the 5' splice sites. The chain is Serine/arginine-rich SC35-like splicing factor SCL30 (SCL30) from Arabidopsis thaliana (Mouse-ear cress).